The following is a 75-amino-acid chain: MVKFMPTTYEIIIYGRIQHVGFRERIENLGHALGIDGIVYNYEDGTVRILANFPSERKKKLFKDKTNFWRVRKCK.

Positions 8–75 constitute an Acylphosphatase-like domain; sequence TYEIIIYGRI…TNFWRVRKCK (68 aa).

The protein is Acylphosphatase-like protein MJ1405 of Methanocaldococcus jannaschii (strain ATCC 43067 / DSM 2661 / JAL-1 / JCM 10045 / NBRC 100440) (Methanococcus jannaschii).